A 297-amino-acid polypeptide reads, in one-letter code: 33 kDa chaperonin (297 aa).

2 disulfides stabilise this stretch: C232-C234 and C266-C269.

Belongs to the HSP33 family. Post-translationally, under oxidizing conditions two disulfide bonds are formed involving the reactive cysteines. Under reducing conditions zinc is bound to the reactive cysteines and the protein is inactive.

It is found in the cytoplasm. Redox regulated molecular chaperone. Protects both thermally unfolding and oxidatively damaged proteins from irreversible aggregation. Plays an important role in the bacterial defense system toward oxidative stress. This Pseudomonas aeruginosa (strain LESB58) protein is 33 kDa chaperonin.